The primary structure comprises 209 residues: Uracil phosphoribosyltransferase (209 aa).

5-phospho-alpha-D-ribose 1-diphosphate contacts are provided by residues R79, R104, and 131 to 139; that span reads DPMLATGNS. Residues I194 and 199 to 201 each bind uracil; that span reads GDA. D200 contacts 5-phospho-alpha-D-ribose 1-diphosphate.

Belongs to the UPRTase family. Requires Mg(2+) as cofactor.

It carries out the reaction UMP + diphosphate = 5-phospho-alpha-D-ribose 1-diphosphate + uracil. Its pathway is pyrimidine metabolism; UMP biosynthesis via salvage pathway; UMP from uracil: step 1/1. Allosterically activated by GTP. Catalyzes the conversion of uracil and 5-phospho-alpha-D-ribose 1-diphosphate (PRPP) to UMP and diphosphate. The polypeptide is Uracil phosphoribosyltransferase (Sinorhizobium fredii (strain NBRC 101917 / NGR234)).